The chain runs to 321 residues: Gap junction delta-2 protein (321 aa).

Topologically, residues 1–19 (MGEWTILERLLEAAVQQHS) are cytoplasmic. The chain crosses the membrane as a helical span at residues 20–42 (TMIGRILLTVVVIFRILIVAIVG). Residues 43-75 (ETVYDDEQTMFVCNTLQPGCNQACYDRAFPISH) are Extracellular-facing. The helical transmembrane segment at 76 to 98 (IRYWVFQIIMVCTPSLCFITYSV) threads the bilayer. At 99-197 (HQSAKQRERR…KLRRQEGISR (99 aa)) the chain is on the cytoplasmic side. A disordered region spans residues 117–141 (DRDPPESMGGPGGTGGGGSGGGKRE). The span at 125–137 (GGPGGTGGGGSGG) shows a compositional bias: gly residues. A helical transmembrane segment spans residues 198-220 (FYIIQVVFRNALEIGFLVGQYFL). At 221 to 252 (YGFSVPGLYECDRYPCIKEVECYVSRPTEKTV) the chain is on the extracellular side. Residues 253–275 (FLVFMFAVSGICVVLNLAELNHL) form a helical membrane-spanning segment. The Cytoplasmic segment spans residues 276-321 (GWRKIKLAVRGAQAKRKSVYEIRNKDLPRVSVPNFGRTQSSDSAYV).

It belongs to the connexin family. Delta-type subfamily. A connexon is composed of a hexamer of connexins.

The protein localises to the cell membrane. It localises to the cell junction. It is found in the gap junction. Functionally, one gap junction consists of a cluster of closely packed pairs of transmembrane channels, the connexons, through which materials of low MW diffuse from one cell to a neighboring cell. This Bos taurus (Bovine) protein is Gap junction delta-2 protein (GJD2).